The chain runs to 672 residues: DNA ligase (672 aa).

NAD(+)-binding positions include 30-34 (DAVYD), 79-80 (SL), and Glu110. Catalysis depends on Lys112, which acts as the N6-AMP-lysine intermediate. Arg133, Glu170, Lys287, and Lys311 together coordinate NAD(+). The Zn(2+) site is built by Cys405, Cys408, Cys423, and Cys429. A BRCT domain is found at 590–672 (ADELPLSGKT…IALLTEHGAI (83 aa)).

This sequence belongs to the NAD-dependent DNA ligase family. LigA subfamily. The cofactor is Mg(2+). Requires Mn(2+) as cofactor.

It carries out the reaction NAD(+) + (deoxyribonucleotide)n-3'-hydroxyl + 5'-phospho-(deoxyribonucleotide)m = (deoxyribonucleotide)n+m + AMP + beta-nicotinamide D-nucleotide.. In terms of biological role, DNA ligase that catalyzes the formation of phosphodiester linkages between 5'-phosphoryl and 3'-hydroxyl groups in double-stranded DNA using NAD as a coenzyme and as the energy source for the reaction. It is essential for DNA replication and repair of damaged DNA. This chain is DNA ligase, found in Marinomonas sp. (strain MWYL1).